The sequence spans 101 residues: Putative pterin-4-alpha-carbinolamine dehydratase (101 aa).

This sequence belongs to the pterin-4-alpha-carbinolamine dehydratase family.

It catalyses the reaction (4aS,6R)-4a-hydroxy-L-erythro-5,6,7,8-tetrahydrobiopterin = (6R)-L-erythro-6,7-dihydrobiopterin + H2O. This chain is Putative pterin-4-alpha-carbinolamine dehydratase, found in Burkholderia mallei (strain ATCC 23344).